The primary structure comprises 1409 residues: Adhesion and penetration protein autotransporter (1409 aa).

The N-terminal stretch at 1 to 25 (MKKTVFRLNFLTACVSLGIASQAWA) is a signal peptide. The 269-residue stretch at 26-294 (GHTYFGIDYQ…LIREEWFYNE (269 aa)) folds into the Peptidase S6 domain. Residue S250 is part of the active site. 2 disordered regions span residues 866-888 (YSASSNNAPRHRRSLETETTPTS) and 1016-1078 (AKQV…SKRA). Over residues 1057 to 1067 (VEQTTETQTSK) the composition is skewed to polar residues. Positions 1068–1077 (PKTKKGRSKR) are enriched in basic residues. The region spanning 1156 to 1409 (VDQAQSALWT…NVGVKLGYRW (254 aa)) is the Autotransporter domain.

The protein localises to the periplasm. It localises to the secreted. Its subcellular location is the cell surface. The protein resides in the cell outer membrane. Its function is as follows. Probable protease; promotes adherence and invasion by directly binding to a host cell structure. The chain is Adhesion and penetration protein autotransporter (hap) from Haemophilus influenzae (strain ATCC 51907 / DSM 11121 / KW20 / Rd).